The sequence spans 107 residues: EPIDERMAL PATTERNING FACTOR-like protein 5 (107 aa).

Residues 1 to 22 (MGVVLPTLIVYAFLLFFSSSSA) form the signal peptide. 3 cysteine pairs are disulfide-bonded: Cys64–Cys98, Cys68–Cys74, and Cys71–Cys100.

Belongs to the plant cysteine rich small secretory peptide family. Epidermal patterning factor subfamily. As to quaternary structure, interacts with ERECTA. As to expression, expressed asymetically in the hypocotyl, on the side proximal to the folded cotyledons at germination. Detected in developing flowers, the chalazal region of ovules and near the root apex, but not in inflorescence stems. Expressed in cotyledons, flowers, adult leaves and fruits.

It localises to the secreted. Functionally, controls stomatal patterning. Mediates differentiation of stomatal lineage cells to pavement cells and stomatal development inhibition. TMM (AC Q9SSD1) functions to dampen or block CLL1 signaling. Acts as a growth-regulatory ligand for ERECTA family receptors. Promotes fruit growth and fertility. In Arabidopsis thaliana (Mouse-ear cress), this protein is EPIDERMAL PATTERNING FACTOR-like protein 5.